A 396-amino-acid polypeptide reads, in one-letter code: Succinyl-CoA:mesaconate CoA-transferase (396 aa).

D175 functions as the Nucleophile in the catalytic mechanism.

It belongs to the CoA-transferase III family.

It catalyses the reaction mesaconate + succinyl-CoA = 2-methylfumaryl-CoA + succinate. Involved in the methylaspartate cycle. Catalyzes the transfer of the CoA moiety from succinyl-CoA to mesaconate to generate mesaconyl-CoA (2-methylfumaryl-CoA) and succinate. The polypeptide is Succinyl-CoA:mesaconate CoA-transferase (Haloarcula marismortui (strain ATCC 43049 / DSM 3752 / JCM 8966 / VKM B-1809) (Halobacterium marismortui)).